The chain runs to 445 residues: Phosphoglucosamine mutase (445 aa).

The Phosphoserine intermediate role is filled by serine 102. Positions 102, 241, 243, and 245 each coordinate Mg(2+). Serine 102 carries the phosphoserine modification.

This sequence belongs to the phosphohexose mutase family. Mg(2+) serves as cofactor. Post-translationally, activated by phosphorylation.

The enzyme catalyses alpha-D-glucosamine 1-phosphate = D-glucosamine 6-phosphate. Its function is as follows. Catalyzes the conversion of glucosamine-6-phosphate to glucosamine-1-phosphate. This is Phosphoglucosamine mutase from Salmonella paratyphi A (strain ATCC 9150 / SARB42).